A 177-amino-acid polypeptide reads, in one-letter code: PLAC8-like protein 1 (177 aa).

This sequence belongs to the cornifelin family.

The chain is PLAC8-like protein 1 (PLAC8L1) from Homo sapiens (Human).